Here is a 392-residue protein sequence, read N- to C-terminus: Na(+)/H(+) antiporter NhaA 2 (392 aa).

The next 11 membrane-spanning stretches (helical) occupy residues 20-40 (FFAA…AALI), 63-83 (VEHW…GLEI), 99-119 (ALPG…YVAF), 127-147 (IGGW…VLSL), 158-178 (IFLS…IALF), 181-201 (SDLS…LVAL), 209-229 (LLPY…SGIH), 265-285 (VAFA…LSGI), 298-318 (VALG…ALAI), 336-356 (GVAA…ALAF), and 365-385 (EVKV…VVVL).

Belongs to the NhaA Na(+)/H(+) (TC 2.A.33) antiporter family.

Its subcellular location is the cell inner membrane. It catalyses the reaction Na(+)(in) + 2 H(+)(out) = Na(+)(out) + 2 H(+)(in). Na(+)/H(+) antiporter that extrudes sodium in exchange for external protons. This Pseudomonas savastanoi pv. phaseolicola (strain 1448A / Race 6) (Pseudomonas syringae pv. phaseolicola (strain 1448A / Race 6)) protein is Na(+)/H(+) antiporter NhaA 2.